We begin with the raw amino-acid sequence, 721 residues long: Kinesin-like protein KIF2C (721 aa).

Positions 1 to 250 are globular; that stretch reads MESLHARLFP…CSPLTVTDPI (250 aa). Phosphoserine occurs at positions 3 and 19. Ser92 carries the post-translational modification Phosphoserine; by AURKB. The short motif at 95–98 is the Microtubule tip localization signal element; that stretch reads SKIP. Phosphoserine is present on residues Ser106, Ser108, Ser112, Ser162, Ser171, Ser183, and Ser188. Residues 164 to 188 are disordered; sequence EAEEQAHSTRSTSSANPGNSVRRKS. The segment covering 171–182 has biased composition (polar residues); that stretch reads STRSTSSANPGN. Residues 203 to 234 are negative regulator of microtubule-binding; that stretch reads EKRAQNSELRIKRAQEYDSSFPNWEFARMIKE. A Kinesin motor domain is found at 254 to 584; the sequence is RICVCVRKRP…LRYADRVKEL (331 aa). Residues Arg260 and 344 to 351 each bind ATP; that span reads GQTGSGKT. 2 positions are modified to phosphoserine: Ser515 and Ser626. The stretch at 614–652 forms a coiled coil; sequence GNEEEELSSQMSSFNEAMTQIRELEERALEELREIIQQG.

It belongs to the TRAFAC class myosin-kinesin ATPase superfamily. Kinesin family. MCAK/KIF2 subfamily. In terms of assembly, interacts with CENPH. Interacts with MTUS2/TIP150; the interaction is direct. Interacts with MAPRE1; the interaction is direct, regulated by phosphorylation and is probably required for targeting to growing microtubule plus ends. Interacts with KIF18B at microtubule tips; this interaction increases the affinity of both partners for microtubule plus ends and is required for robust microtubule depolymerization. Phosphorylation by AURKA or AURKB strongly reduces KIF18B-binding. In terms of processing, phosphorylation by AURKB, regulates association with centromeres and kinetochores and the microtubule depolymerization activity. Ubiquitinated.

The protein localises to the cytoplasm. It is found in the cytoskeleton. The protein resides in the nucleus. It localises to the chromosome. Its subcellular location is the centromere. The protein localises to the kinetochore. Its function is as follows. In complex with KIF18B, constitutes the major microtubule plus-end depolymerizing activity in mitotic cells. Regulates the turnover of microtubules at the kinetochore and functions in chromosome segregation during mitosis. Plays a role in chromosome congression and is required for the lateral to end-on conversion of the chromosome-microtubule attachment. This is Kinesin-like protein KIF2C (Kif2c) from Mus musculus (Mouse).